We begin with the raw amino-acid sequence, 179 residues long: MASHIGKLPIEIPAGVEVTINGQEFAAKGAKGSDSYTIPEGVTAKVEGNEIIVTANDDLRPTRAKHGLARSIVASMVKGVHDGYSKSLDIVGTGYRAQMKGKGIEFSLGYSHTITVNPPEGITLELPNPNQVIVKGTDKQAVGQVAANIRKLRAPEPYKGKGIKYSDEVIRRKAGKAGK.

The protein belongs to the universal ribosomal protein uL6 family. As to quaternary structure, part of the 50S ribosomal subunit.

Its function is as follows. This protein binds to the 23S rRNA, and is important in its secondary structure. It is located near the subunit interface in the base of the L7/L12 stalk, and near the tRNA binding site of the peptidyltransferase center. The chain is Large ribosomal subunit protein uL6 from Bifidobacterium animalis subsp. lactis (strain AD011).